We begin with the raw amino-acid sequence, 222 residues long: Deoxyribose-phosphate aldolase (222 aa).

The active-site Proton donor/acceptor is the Asp90. Lys152 functions as the Schiff-base intermediate with acetaldehyde in the catalytic mechanism. Lys181 serves as the catalytic Proton donor/acceptor.

It belongs to the DeoC/FbaB aldolase family. DeoC type 1 subfamily.

Its subcellular location is the cytoplasm. It carries out the reaction 2-deoxy-D-ribose 5-phosphate = D-glyceraldehyde 3-phosphate + acetaldehyde. Its pathway is carbohydrate degradation; 2-deoxy-D-ribose 1-phosphate degradation; D-glyceraldehyde 3-phosphate and acetaldehyde from 2-deoxy-alpha-D-ribose 1-phosphate: step 2/2. In terms of biological role, catalyzes a reversible aldol reaction between acetaldehyde and D-glyceraldehyde 3-phosphate to generate 2-deoxy-D-ribose 5-phosphate. This Pectobacterium atrosepticum (strain SCRI 1043 / ATCC BAA-672) (Erwinia carotovora subsp. atroseptica) protein is Deoxyribose-phosphate aldolase.